We begin with the raw amino-acid sequence, 299 residues long: ATP phosphoribosyltransferase (299 aa).

The protein belongs to the ATP phosphoribosyltransferase family. Long subfamily. As to quaternary structure, equilibrium between an active dimeric form, an inactive hexameric form and higher aggregates. Interconversion between the various forms is largely reversible and is influenced by the natural substrates and inhibitors of the enzyme. The cofactor is Mg(2+).

The protein localises to the cytoplasm. The enzyme catalyses 1-(5-phospho-beta-D-ribosyl)-ATP + diphosphate = 5-phospho-alpha-D-ribose 1-diphosphate + ATP. Its pathway is amino-acid biosynthesis; L-histidine biosynthesis; L-histidine from 5-phospho-alpha-D-ribose 1-diphosphate: step 1/9. Its activity is regulated as follows. Feedback inhibited by histidine. In terms of biological role, catalyzes the condensation of ATP and 5-phosphoribose 1-diphosphate to form N'-(5'-phosphoribosyl)-ATP (PR-ATP). Has a crucial role in the pathway because the rate of histidine biosynthesis seems to be controlled primarily by regulation of HisG enzymatic activity. This Salmonella enteritidis PT4 (strain P125109) protein is ATP phosphoribosyltransferase.